We begin with the raw amino-acid sequence, 813 residues long: Probable receptor-like protein kinase At5g39020 (813 aa).

The first 21 residues, 1–21, serve as a signal peptide directing secretion; that stretch reads MNCNVLFLLSVLVSVTAGVTA. Residues 22 to 437 lie on the Extracellular side of the membrane; sequence AYHPTDVFLF…TPPIKGKPHV (416 aa). N-linked (GlcNAc...) asparagine glycosylation is found at asparagine 46, asparagine 61, asparagine 165, asparagine 202, asparagine 213, asparagine 263, asparagine 286, asparagine 293, asparagine 384, and asparagine 401. The helical transmembrane segment at 438 to 458 threads the bilayer; that stretch reads LVIILIVVGSVIGLATFIVII. Residues 459-813 are Cytoplasmic-facing; that stretch reads MLLIRQMKRK…QTQTLDSTII (355 aa). The Protein kinase domain maps to 496–771; sequence KSFSHTVGKG…KVVEMIEGSL (276 aa). ATP contacts are provided by residues 502–510 and lysine 524; that span reads VGKGGFGTV. Catalysis depends on aspartate 619, which acts as the Proton acceptor. Residues 791–813 form a disordered region; it reads ESSSLSDGQEAEKQTQTLDSTII. The span at 804–813 shows a compositional bias: polar residues; that stretch reads QTQTLDSTII.

The protein belongs to the protein kinase superfamily. Ser/Thr protein kinase family.

It is found in the membrane. This Arabidopsis thaliana (Mouse-ear cress) protein is Probable receptor-like protein kinase At5g39020.